Here is a 449-residue protein sequence, read N- to C-terminus: Pentalenene oxygenase (449 aa).

A helical membrane pass occupies residues 251 to 273 (VITVMAAGTETVAGTLTWIFHLL). C393 contributes to the heme binding site.

It belongs to the cytochrome P450 family.

It localises to the membrane. The catalysed reaction is pentalenene + 4 reduced [2Fe-2S]-[ferredoxin] + 2 O2 + 4 H(+) = pentalen-13-al + 4 oxidized [2Fe-2S]-[ferredoxin] + 3 H2O. Its pathway is antibiotic biosynthesis; neopentalenolactone biosynthesis. In terms of biological role, catalyzes the conversion of pentalenene to pentalen-13-al by stepwise oxidation via pentalen-13-ol, a precursor of neopentalenolactone antibiotic. This is Pentalenene oxygenase (ptlI) from Streptomyces avermitilis (strain ATCC 31267 / DSM 46492 / JCM 5070 / NBRC 14893 / NCIMB 12804 / NRRL 8165 / MA-4680).